We begin with the raw amino-acid sequence, 65 residues long: Large ribosomal subunit protein bL35 (65 aa).

A disordered region spans residues 1–26 (MPKMKTNKSAQKRFKKTGSGRFKCKQ). Over residues 10-26 (AQKRFKKTGSGRFKCKQ) the composition is skewed to basic residues.

The protein belongs to the bacterial ribosomal protein bL35 family.

This is Large ribosomal subunit protein bL35 from Hydrogenovibrio crunogenus (strain DSM 25203 / XCL-2) (Thiomicrospira crunogena).